The primary structure comprises 678 residues: MEPGGDHRSRSSGGRGGPGPAVASARGRRLPPAGSSGSAEPEEDEGGQDLQLEGGALGSWGSAPLPSSRARGPASSGRKYSDHCEARASRPGKSRIPGRDHRRYYHDHWRLEYLMDFNPARHGMVCMVCGSSLATLKLSTIKRHIRQKHPYSLHWSPREKEVISNSWDAHLGLGACGEAEGLGVQGAEEEEEEEEEEEEEGAGVPACPPKGPGKAPAGGGCRRQRRGGPVAPRARRLRLSASRRAGGSRGLGARRLERRLKESLQNWFRAECLMDYDPRGNRLVCMACGRALPSLHLDDIRAHVLEVHPGSLGLSGPQRSALLQAWGGQPEALSELTQSPPGDDLAPQDLTGKSRDSASAAGAPSSQDLSPPDVKEEAGWVPERPGPAEEEEELEEGEGERAGVPGRSPRGRAHRRHPQERWRLEYLMELDGGRRGLVCGVCGGALASLKMSTIERHIRRRHPGSTRLGGPVQALIAREWSEKAAHLLALGPPRPESPQGPIPPGTAAASDEGGGDEEEEPEEEEEEWGDVPLSPGAPLERPAEEEEDEEDGQEPGGLALPPPPPPPPPPPPRSREQRRNYQPRWRGEYLMDYDGSRRGLVCMVCGGALATLKVSTIKRHILQVHPFSMDFTPEERQTILEAYEEAALRCYGHEGFGPPAPAPRDGGADLKSGAVCRA.

Disordered stretches follow at residues 1–100 (MEPG…PGRD), 182–250 (LGVQ…GSRG), 329–417 (QPEA…HRRH), and 490–583 (LGPP…NYQP). Residues 62 to 78 (SAPLPSSRARGPASSGR) show a composition bias toward low complexity. Over residues 79–88 (KYSDHCEARA) the composition is skewed to basic and acidic residues. Residues 187 to 201 (AEEEEEEEEEEEEEG) show a composition bias toward acidic residues. A Glycyl lysine isopeptide (Lys-Gly) (interchain with G-Cter in SUMO2) cross-link involves residue Lys375. Residues 388-398 (AEEEEELEEGE) show a composition bias toward acidic residues. Over residues 492–504 (PPRPESPQGPIPP) the composition is skewed to pro residues. Acidic residues-rich tracts occupy residues 513-529 (GGGD…EEWG) and 543-553 (AEEEEDEEDGQ). Residues 560–572 (LPPPPPPPPPPPP) are compositionally biased toward pro residues. Basic and acidic residues predominate over residues 573–583 (RSREQRRNYQP).

This Homo sapiens (Human) protein is Zinc finger translocation-associated protein.